We begin with the raw amino-acid sequence, 206 residues long: Orotate phosphoribosyltransferase (206 aa).

5-phospho-alpha-D-ribose 1-diphosphate is bound by residues Arg93, Lys97, His99, and 119–127 (EDLISTGGT). Position 123 (Ser123) interacts with orotate.

Belongs to the purine/pyrimidine phosphoribosyltransferase family. PyrE subfamily. Homodimer. Requires Mg(2+) as cofactor.

It catalyses the reaction orotidine 5'-phosphate + diphosphate = orotate + 5-phospho-alpha-D-ribose 1-diphosphate. It functions in the pathway pyrimidine metabolism; UMP biosynthesis via de novo pathway; UMP from orotate: step 1/2. In terms of biological role, catalyzes the transfer of a ribosyl phosphate group from 5-phosphoribose 1-diphosphate to orotate, leading to the formation of orotidine monophosphate (OMP). This is Orotate phosphoribosyltransferase from Bacillus caldolyticus.